A 339-amino-acid chain; its full sequence is Phosphate acyltransferase (339 aa).

Belongs to the PlsX family. As to quaternary structure, homodimer. Probably interacts with PlsY.

The protein localises to the cytoplasm. The catalysed reaction is a fatty acyl-[ACP] + phosphate = an acyl phosphate + holo-[ACP]. Its pathway is lipid metabolism; phospholipid metabolism. In terms of biological role, catalyzes the reversible formation of acyl-phosphate (acyl-PO(4)) from acyl-[acyl-carrier-protein] (acyl-ACP). This enzyme utilizes acyl-ACP as fatty acyl donor, but not acyl-CoA. The polypeptide is Phosphate acyltransferase (Ruthia magnifica subsp. Calyptogena magnifica).